We begin with the raw amino-acid sequence, 47 residues long: Large ribosomal subunit protein bL36B (47 aa).

Belongs to the bacterial ribosomal protein bL36 family.

The sequence is that of Large ribosomal subunit protein bL36B from Pectobacterium atrosepticum (strain SCRI 1043 / ATCC BAA-672) (Erwinia carotovora subsp. atroseptica).